Here is a 322-residue protein sequence, read N- to C-terminus: ATP-dependent 6-phosphofructokinase (322 aa).

Gly-11 is an ATP binding site. An ADP-binding site is contributed by 21-25 (RAVTR). ATP is bound by residues 72–73 (RC) and 102–105 (GDGS). Residue Asp-103 coordinates Mg(2+). Residue 127-129 (TID) coordinates substrate. Residue Asp-129 is the Proton acceptor of the active site. An ADP-binding site is contributed by Arg-156. Substrate contacts are provided by residues Arg-164 and 171 to 173 (MGR). ADP-binding positions include 187-189 (GAE), Arg-213, and 215-217 (KKH). Substrate is bound by residues Glu-224, Arg-245, and 251-254 (HIQR).

This sequence belongs to the phosphofructokinase type A (PFKA) family. ATP-dependent PFK group I subfamily. Prokaryotic clade 'B1' sub-subfamily. In terms of assembly, homotetramer. Mg(2+) serves as cofactor.

It is found in the cytoplasm. The enzyme catalyses beta-D-fructose 6-phosphate + ATP = beta-D-fructose 1,6-bisphosphate + ADP + H(+). It functions in the pathway carbohydrate degradation; glycolysis; D-glyceraldehyde 3-phosphate and glycerone phosphate from D-glucose: step 3/4. With respect to regulation, allosterically activated by ADP and other diphosphonucleosides, and allosterically inhibited by phosphoenolpyruvate. In terms of biological role, catalyzes the phosphorylation of D-fructose 6-phosphate to fructose 1,6-bisphosphate by ATP, the first committing step of glycolysis. In Staphylococcus epidermidis (strain ATCC 35984 / DSM 28319 / BCRC 17069 / CCUG 31568 / BM 3577 / RP62A), this protein is ATP-dependent 6-phosphofructokinase.